Here is a 367-residue protein sequence, read N- to C-terminus: Embryonic developmental protein tofu-6 (367 aa).

The RRM domain maps to 13-92 (AGFHIRNIPK…FTLKVTDHKN (80 aa)). The required for ife-3 interaction stretch occupies residues 298 to 345 (KSILADRLQRKGVCEYLPRSQQPHYAYSRETLLQHNNSGVTAQISNDA).

Component of the pid-1 variant of the PETISCO complex (also called the pid-3, erh-2, tofu-6, and ife-3 small RNA complex) containing at least pid-1, tofu-6, ife-3, pid-3, and erh-2, which is required for the biogenesis of 21 nucleotide PIWI-interacting RNAs (piRNAs) that possess a uracil residue at the 5'-end (also called 21U-RNAs). Within the pid-1 variant of the PETISCO complex interacts with pid-1. Component of the tost-1 variant of the PETISCO complex (also called the pid-3, erh-2, tofu-6, and ife-3 small RNA complex) containing at least tost-1, tofu-6, ife-3, pid-3, and erh-2, which plays an essential role in embryogenesis. Within the tost-1 variant of the PETISCO complex interacts with tost-1. Within the pid-1 and tost-1 variants of the PETISCO complexes interacts (via C-terminus) with ife-3. Within the pid-1 and tost-1 variants of the PETISCO complexes interacts (via the RRM domain) with pid-3. Within the pid-1 and tost-1 variants of the PETISCO complexes interacts (via the RRM domain) with erh-2. In contrast to the pid-1 variant of the PETISCO complex, the tost-1 variant of the PETISCO complex plays a minor role in the biogenesis of 21U-RNAs. Interacts (via residues 120-314) with the PUCH complex subunit tofu-1 (via residues 82-172); the interaction between the PETISCO and PUCH complex members enhances piRNA production in vivo. As to expression, expression is restricted to the germline (at protein level).

It is found in the cytoplasm. The protein resides in the perinuclear region. The protein localises to the nucleus. Its function is as follows. Component of the pid-1 and tost-1 variants of the PETISCO complexes, which have roles in the biogenesis of a class of 21 nucleotide PIWI-interacting RNAs (piRNAs) that possess a uracil residue at the 5'-end (also called 21U-RNAs) and embryogenesis, respectively. Promotes the biogenesis of 21U-RNAs. Mediates the interaction between the PETISCO complex and the PUCH complex, the endoribonuclease complex processing the 5'-end of precursor piRNAs, thereby enhancing mature piRNA production. Required for chromosome segregation and cell division in early embryos. May have a role in DNA replication. This Caenorhabditis elegans protein is Embryonic developmental protein tofu-6.